We begin with the raw amino-acid sequence, 1091 residues long: ATPase family AAA domain-containing protein 2 (1091 aa).

Residues 32 to 211 (LEDLGVFNET…HFERRRKRSR (180 aa)) form a disordered region. Basic and acidic residues predominate over residues 53 to 62 (KQKDIQRTDE). Over residues 74 to 119 (SSEEGEDQEHEDDGEDEDDEDEDDDDDDDDDDDDDEDDEDEEDGEE) the composition is skewed to acidic residues. Lys-148 participates in a covalent cross-link: Glycyl lysine isopeptide (Lys-Gly) (interchain with G-Cter in SUMO2). A phosphoserine mark is found at Ser-158, Ser-168, Ser-173, and Ser-241. 298–305 (GPPGTGKT) provides a ligand contact to ATP. 2 positions are modified to phosphoserine: Ser-577 and Ser-582. Coiled coils occupy residues 801–825 (LTAEEVKRLEEQEEDTFRELRIFLR) and 917–943 (YAIIKEELDEDFEQLCEEIQESRKKRG). The Bromo domain occupies 811–923 (EQEEDTFREL…DTAYAIIKEE (113 aa)). Lys-959 participates in a covalent cross-link: Glycyl lysine isopeptide (Lys-Gly) (interchain with G-Cter in SUMO2). The interval 961–985 (NSTLVGDKRSDPEQNEKLKTPSTPV) is disordered. Basic and acidic residues predominate over residues 966–979 (GDKRSDPEQNEKLK). Position 970 is a phosphoserine (Ser-970). Lys-979 is covalently cross-linked (Glycyl lysine isopeptide (Lys-Gly) (interchain with G-Cter in SUMO2)). A phosphothreonine mark is found at Thr-980 and Thr-983. Residue Ser-1003 is modified to Phosphoserine. Thr-1024 carries the phosphothreonine modification.

This sequence belongs to the AAA ATPase family. Interaction with ESR1 and NCOA3 is enhanced by estradiol. Interacts with acetylated lysine residues on histone H1.4, H2A, H2B and H3 (in vitro).

It is found in the nucleus. It catalyses the reaction ATP + H2O = ADP + phosphate + H(+). Functionally, may be a transcriptional coactivator of the nuclear receptor ESR1 required to induce the expression of a subset of estradiol target genes, such as CCND1, MYC and E2F1. May play a role in the recruitment or occupancy of CREBBP at some ESR1 target gene promoters. May be required for histone hyperacetylation. The polypeptide is ATPase family AAA domain-containing protein 2 (ATAD2) (Pongo abelii (Sumatran orangutan)).